We begin with the raw amino-acid sequence, 363 residues long: 3-isopropylmalate dehydrogenase (363 aa).

NAD(+) is bound at residue 78–91; sequence GKKWDYLPIESRPE. Arg99, Arg109, Arg138, and Asp227 together coordinate substrate. Mg(2+) contacts are provided by Asp227, Asp251, and Asp255. Position 285-297 (285-297) interacts with NAD(+); that stretch reads GSAPDIEGKNIAN.

The protein belongs to the isocitrate and isopropylmalate dehydrogenases family. LeuB type 1 subfamily. In terms of assembly, homodimer. Mg(2+) is required as a cofactor. It depends on Mn(2+) as a cofactor.

Its subcellular location is the cytoplasm. The enzyme catalyses (2R,3S)-3-isopropylmalate + NAD(+) = 4-methyl-2-oxopentanoate + CO2 + NADH. The protein operates within amino-acid biosynthesis; L-leucine biosynthesis; L-leucine from 3-methyl-2-oxobutanoate: step 3/4. Its function is as follows. Catalyzes the oxidation of 3-carboxy-2-hydroxy-4-methylpentanoate (3-isopropylmalate) to 3-carboxy-4-methyl-2-oxopentanoate. The product decarboxylates to 4-methyl-2 oxopentanoate. This chain is 3-isopropylmalate dehydrogenase (leuB), found in Buchnera aphidicola subsp. Rhopalosiphum padi.